A 1239-amino-acid chain; its full sequence is MAAVLESLLREEVPVAAAVRWIARSTPSSEDSSEVAALSALRPLRKEFVPFLLNFLREQSSRVLPQGPSTPAKTPVASAALPARQGAPARGGRGARSQLFPAAEPLSAAAEAPLARRAGRRRGPGPGPSRERGGRGSGAAEEGASGESPPWAGGRKPKGSGSPGSPRLSLSDPPNLSNLEEFPPVGTVPPGSAGRTKPSRRINPTPVSEERSLSKPKTCFTSPPISCVPSSQPSTLDTSPWGLGLPPGCRSLQEEREMLRKARTKQLQQSPTPASPIPESGSPVPSRTGNLTAEPADPARVSSRQRLELVALIYSSCIAENLVPNLFLELFFVLQLLTARRMVATKDSDLESSQGALDSLDTPLFRSIHDCVFFAVQVLEHQFQVLSYLDKGTLKLLAENERLLCFSPALQGRLRAAYEGSVAKVSLVIPPSAQAVSFQPETDNRANFSSDRAFHTFKKQRDVFYEVLREWEDHHEEPSWDFEKGLGSRIRAMMGQLSAACSHSHFVRLFQKQLLQMCQSPGGAGGSVLGEAPDVLNMLGADKLGRLRQLQERLIAPQSSGGPCPPPTFPGCQGFFRDFIMSASSFHFNQHLMDSLSLKIRELNGLRLPQHEPGDEDGESDMDWQGERRQFAVVLLSLRLLAKFLGFVAFLPYRGHEPPPTRELQDSILALRSQVPPVLDIRALLQQGLWARRAVLTVPWLVEFLSFADHIVPLLDYYRSVFTLLLRLHRSLVLSKENEGEMCFLNKLLLLAVLGWLFQIPTVPEDLFFLEDGQVDAFEVTTTASEHGLDSVPVVDQQLLYTCCPYIGELRKLLASWVSGSSGRSGGFVRKITPTTTSSLGALPLQTSQGLQAQLAEAFFHNQPPSLRRTVEFVAERIGSNCVKHIKATLVADLVHQAESLLQEQLVARGQEGGDPAQLLESLCSQLCPHGAQALTQGREFCQRKSPTAVRALLPEETPAAVLSSAENIAVGLATEKACSWLSANITALIRREVKAAVSRMLRAQGPEPTARVERRGCSRACEHHAPLPSHLISEIKFHHCSLQDVLSLAAGPRDPEEGVSPEHLEQLLNQMGQSLRCRQFLCPTAEQHLAKCSVELASLLVADQIPILGPPTQHRLERGHARRLLHMLLSLWKDDFQGPVPLQLLLSPRNVGLLADTRPREWDLLLFLLRELVEKDLMGHLEIEACLGRLNEAQWPGDFSEELSTLFRLFLAEPHLLEPQLRACELMQPNRGTVLAQS.

Ala2 carries the post-translational modification N-acetylalanine. A compositionally biased stretch (polar residues) spans 61–72 (SRVLPQGPSTPA). 2 disordered regions span residues 61 to 249 (SRVL…PPGC) and 261 to 299 (KART…ADPA). A Phosphothreonine modification is found at Thr70. Composition is skewed to low complexity over residues 77–88 (ASAALPARQGAP), 95–116 (ARSQ…PLAR), and 138–179 (GAAE…LSNL). The tract at residues 193–213 (AGRTKPSRRINPTPVSEERSL) is interaction with ASF1A/B. A compositionally biased stretch (polar residues) spans 219 to 238 (CFTSPPISCVPSSQPSTLDT). Ser270 carries the post-translational modification Phosphoserine. A run of 2 helical transmembrane segments spans residues 317 to 337 (CIAE…LQLL) and 631 to 651 (FAVV…VAFL).

Interacts with ASF1A and ASF1B. Found in a cytosolic complex with ASF1A, ASF1B, IPO4 and histones H3.1 and H4. Widely expressed in adult mice, the highest levels can be measured in erythropoietic cells.

It is found in the cytoplasm. It localises to the nucleus. The protein localises to the membrane. In terms of biological role, may act as a negative regulator of ASF1 in chromatin assembly. This Mus musculus (Mouse) protein is Codanin-1 (Cdan1).